Consider the following 473-residue polypeptide: Trigger factor (473 aa).

Residues 162–243 (GDFVSIDLSA…VKSIKVRELP (82 aa)) form the PPIase FKBP-type domain. Positions 433-473 (TAEFFGPSGEQAEAEQDEAAPAEDATEETDADSDEAADDSK) are disordered. Positions 444–473 (AEAEQDEAAPAEDATEETDADSDEAADDSK) are enriched in acidic residues.

The protein belongs to the FKBP-type PPIase family. Tig subfamily.

The protein localises to the cytoplasm. The enzyme catalyses [protein]-peptidylproline (omega=180) = [protein]-peptidylproline (omega=0). In terms of biological role, involved in protein export. Acts as a chaperone by maintaining the newly synthesized protein in an open conformation. Functions as a peptidyl-prolyl cis-trans isomerase. The chain is Trigger factor from Mycolicibacterium vanbaalenii (strain DSM 7251 / JCM 13017 / BCRC 16820 / KCTC 9966 / NRRL B-24157 / PYR-1) (Mycobacterium vanbaalenii).